The chain runs to 99 residues: Putative membrane protein insertion efficiency factor (99 aa).

The protein belongs to the UPF0161 family.

The protein localises to the cell membrane. Could be involved in insertion of integral membrane proteins into the membrane. This chain is Putative membrane protein insertion efficiency factor, found in Corynebacterium glutamicum (strain ATCC 13032 / DSM 20300 / JCM 1318 / BCRC 11384 / CCUG 27702 / LMG 3730 / NBRC 12168 / NCIMB 10025 / NRRL B-2784 / 534).